Here is a 289-residue protein sequence, read N- to C-terminus: 4-hydroxy-tetrahydrodipicolinate synthase (289 aa).

Thr43 serves as a coordination point for pyruvate. The active-site Proton donor/acceptor is Tyr131. Lys160 (schiff-base intermediate with substrate) is an active-site residue. Pyruvate is bound at residue Val200.

Belongs to the DapA family. As to quaternary structure, homotetramer; dimer of dimers.

The protein resides in the cytoplasm. It catalyses the reaction L-aspartate 4-semialdehyde + pyruvate = (2S,4S)-4-hydroxy-2,3,4,5-tetrahydrodipicolinate + H2O + H(+). Its pathway is amino-acid biosynthesis; L-lysine biosynthesis via DAP pathway; (S)-tetrahydrodipicolinate from L-aspartate: step 3/4. Catalyzes the condensation of (S)-aspartate-beta-semialdehyde [(S)-ASA] and pyruvate to 4-hydroxy-tetrahydrodipicolinate (HTPA). In Methanococcus maripaludis (strain C5 / ATCC BAA-1333), this protein is 4-hydroxy-tetrahydrodipicolinate synthase.